The following is a 188-amino-acid chain: Transcription factor E (188 aa).

The 90-residue stretch at 9–98 (DLEVLRDVTL…SWRLNLREVL (90 aa)) folds into the HTH TFE/IIEalpha-type domain.

This sequence belongs to the TFE family. As to quaternary structure, monomer. Interaction with RNA polymerase subunits RpoF and RpoE is necessary for Tfe stimulatory transcription activity. Able to interact with Tbp and RNA polymerase in the absence of DNA promoter. Interacts both with the preinitiation and elongation complexes.

In terms of biological role, transcription factor that plays a role in the activation of archaeal genes transcribed by RNA polymerase. Facilitates transcription initiation by enhancing TATA-box recognition by TATA-box-binding protein (Tbp), and transcription factor B (Tfb) and RNA polymerase recruitment. Not absolutely required for transcription in vitro, but particularly important in cases where Tbp or Tfb function is not optimal. It dynamically alters the nucleic acid-binding properties of RNA polymerases by stabilizing the initiation complex and destabilizing elongation complexes. Seems to translocate with the RNA polymerase following initiation and acts by binding to the non template strand of the transcription bubble in elongation complexes. This is Transcription factor E from Methanopyrus kandleri (strain AV19 / DSM 6324 / JCM 9639 / NBRC 100938).